The following is a 347-amino-acid chain: NADH-ubiquinone oxidoreductase chain 2 (347 aa).

10 helical membrane-spanning segments follow: residues 3–23 (PMIFIILLATIMLGSSIVMMS), 25–45 (HWFMTWLGFEMNMMAIVPVLM), 59–79 (YFLTQATASMILMLAIIINLM), 96–116 (MLITIALVMKLGLAPFHFWVP), 122–142 (IPLSSGLILLTWQKIAPLSLL), 149–169 (INMELFLTMSLLSIVIGGWGG), 201–221 (SFLNLLVYILMTSSMFALLIF), 239–259 (IIATMSLIILLSLGGLPPLTG), 274–294 (NSTILPTLMAISALLNLFFYI), and 326–346 (ILPLITISTLALPLTPLFLML).

The protein belongs to the complex I subunit 2 family. In terms of assembly, core subunit of respiratory chain NADH dehydrogenase (Complex I) which is composed of 45 different subunits. Interacts with TMEM242.

The protein resides in the mitochondrion inner membrane. The catalysed reaction is a ubiquinone + NADH + 5 H(+)(in) = a ubiquinol + NAD(+) + 4 H(+)(out). Its function is as follows. Core subunit of the mitochondrial membrane respiratory chain NADH dehydrogenase (Complex I) that is believed to belong to the minimal assembly required for catalysis. Complex I functions in the transfer of electrons from NADH to the respiratory chain. The immediate electron acceptor for the enzyme is believed to be ubiquinone. In Crocidura hildegardeae (Hildegarde's shrew), this protein is NADH-ubiquinone oxidoreductase chain 2.